The following is a 369-amino-acid chain: Uroporphyrinogen decarboxylase (369 aa).

Residues 28–32 (RQAGR), D78, Y154, S209, and H339 each bind substrate.

Belongs to the uroporphyrinogen decarboxylase family. Homodimer.

The protein localises to the cytoplasm. It catalyses the reaction uroporphyrinogen III + 4 H(+) = coproporphyrinogen III + 4 CO2. It functions in the pathway porphyrin-containing compound metabolism; protoporphyrin-IX biosynthesis; coproporphyrinogen-III from 5-aminolevulinate: step 4/4. In terms of biological role, catalyzes the decarboxylation of four acetate groups of uroporphyrinogen-III to yield coproporphyrinogen-III. The chain is Uroporphyrinogen decarboxylase from Polaromonas sp. (strain JS666 / ATCC BAA-500).